A 282-amino-acid polypeptide reads, in one-letter code: S-formylglutathione hydrolase (282 aa).

Alanine 2 carries the N-acetylalanine modification. Lysine 4 carries the N6-succinyllysine modification. The Charge relay system role is filled by serine 149. N6-acetyllysine is present on lysine 200. Active-site charge relay system residues include aspartate 226 and histidine 260.

It belongs to the esterase D family. In terms of assembly, homodimer.

The protein resides in the cytoplasm. It is found in the cytoplasmic vesicle. The catalysed reaction is S-formylglutathione + H2O = formate + glutathione + H(+). Its function is as follows. Serine hydrolase involved in the detoxification of formaldehyde. This chain is S-formylglutathione hydrolase (Esd), found in Mus musculus (Mouse).